The primary structure comprises 566 residues: OTU domain-containing protein 5 (566 aa).

Disordered regions lie at residues 1-117 (MTIL…GDAL) and 146-175 (PGHS…GAGY). The span at 11–30 (PPDADPANEPPPPGPLPPAP) shows a compositional bias: pro residues. Residues 32–47 (RGGGVGVGGGGTGVGG) show a composition bias toward gly residues. The span at 63–75 (ASPPPQGPLPGPP) shows a compositional bias: pro residues. At S64 the chain carries Phosphoserine. Positions 84–97 (AVPPGAVAGPRPQQ) are enriched in low complexity. A compositionally biased stretch (gly residues) spans 105 to 115 (GPGGPGGGPGD). The residue at position 165 (S165) is a Phosphoserine. A Phosphotyrosine modification is found at Y175. Position 177 is a phosphoserine (S177). Phosphothreonine is present on T195. The OTU domain maps to 213 to 336 (FIIKQMKEDG…NIHYNSVVNP (124 aa)). Positions 218–224 (MKEDGAC) are cys-loop. D221 is a catalytic residue. C224 serves as the catalytic Nucleophile. The interval 273 to 283 (KRKNNCHGNHI) is variable-loop. Residue S323 is modified to Phosphoserine. The his-loop stretch occupies residues 324 to 329 (YHRNIH). The active site involves H329. Residues S332 and S370 each carry the phosphoserine modification. Residues 413 to 497 (ARQVRGPSQP…PGTSSQFSAG (85 aa)) are disordered. Low complexity-rich tracts occupy residues 425 to 438 (ASAT…AASS) and 445 to 457 (SRSP…ASSP). Position 447 is a phosphoserine (S447). T502 carries the post-translational modification Phosphothreonine. Residue S503 is modified to Phosphoserine.

The protein belongs to the peptidase C85 family. As to quaternary structure, interacts with TRAF3. In terms of processing, phosphorylation at Ser-177 is required for deubiquitinating activity. Phosphorylation at Ser-323, Ser-332 and Ser-503 by MTOR promotes its activity.

It is found in the nucleus. It catalyses the reaction Thiol-dependent hydrolysis of ester, thioester, amide, peptide and isopeptide bonds formed by the C-terminal Gly of ubiquitin (a 76-residue protein attached to proteins as an intracellular targeting signal).. Its activity is regulated as follows. Inhibited by N-ethyl-maleimide (NEM). Functionally, deubiquitinating enzyme that functions as a negative regulator of the innate immune system. Has peptidase activity towards 'Lys-48'- and 'Lys-63'-linked polyubiquitin chains. Can also cleave 'Lys-11'-linked ubiquitin chains (in vitro). Acts via TRAF3 deubiquitination and subsequent suppression of type I interferon (IFN) production. Controls neuroectodermal differentiation through cleaving 'Lys-48'-linked ubiquitin chains to counteract degradation of select chromatin regulators such as ARID1A, HDAC2 and HCF1. Acts as a positive regulator of mTORC1 and mTORC2 signaling following phosphorylation by MTOR: acts by mediating deubiquitination of BTRC, leading to its stability. The chain is OTU domain-containing protein 5 from Rattus norvegicus (Rat).